We begin with the raw amino-acid sequence, 202 residues long: MGKSELSGRLNWQALAGLKASGAEQNLYNVFNAVFEGTKYVLYEKPKHLKNLYAQVVLPDDVIKEIFNPLIDLSTTQWGVSPDFAIENTETHKILFGEIKRQDGWVEGKDPSAGRGNAHERSCKLFTPGLLKAYRTIGGINDEEILPFWVVFEGDITRDPKRVREITFWYDHYQDNYFMWRPNESGEKLVQHFNEKLKKYLD.

Homodimer.

The catalysed reaction is Endonucleolytic cleavage of DNA to give specific double-stranded fragments with terminal 5'-phosphates.. Functionally, a P subtype restriction enzyme that recognizes the double-stranded sequence 5'-CAATTG-3' and cleaves after C-1. The chain is Type II restriction enzyme MunI from Mycoplasma sp.